The following is a 261-amino-acid chain: Small ribosomal subunit protein eS1 (261 aa).

The segment covering 1–18 (MAVGKNKRISKGKKGGKK) has biased composition (basic residues). Positions 1-22 (MAVGKNKRISKGKKGGKKKAAD) are disordered.

This sequence belongs to the eukaryotic ribosomal protein eS1 family. Component of the small ribosomal subunit. Mature ribosomes consist of a small (40S) and a large (60S) subunit. The 40S subunit contains about 33 different proteins and 1 molecule of RNA (18S). The 60S subunit contains about 49 different proteins and 3 molecules of RNA (25S, 5.8S and 5S).

The protein resides in the cytoplasm. The sequence is that of Small ribosomal subunit protein eS1 from Cicer arietinum (Chickpea).